The chain runs to 880 residues: Alanine--tRNA ligase (880 aa).

Zn(2+) is bound by residues H566, H570, C668, and H672.

This sequence belongs to the class-II aminoacyl-tRNA synthetase family. Requires Zn(2+) as cofactor.

It localises to the cytoplasm. The enzyme catalyses tRNA(Ala) + L-alanine + ATP = L-alanyl-tRNA(Ala) + AMP + diphosphate. Catalyzes the attachment of alanine to tRNA(Ala) in a two-step reaction: alanine is first activated by ATP to form Ala-AMP and then transferred to the acceptor end of tRNA(Ala). Also edits incorrectly charged Ser-tRNA(Ala) and Gly-tRNA(Ala) via its editing domain. This is Alanine--tRNA ligase from Alkaliphilus oremlandii (strain OhILAs) (Clostridium oremlandii (strain OhILAs)).